The following is a 382-amino-acid chain: uncharacterized protein (382 aa).

Transmembrane regions (helical) follow at residues 14–34, 45–65, 79–99, 102–122, 131–151, 157–177, 204–224, 235–255, 270–290, 291–311, 325–345, and 348–368; these read GLLLLTLAIAVLNTLVPLWLA, VVSSSYFTGNLVGTLLTGYVI, FIFAAGCAGLGLMIGFWSWLA, FVAGVGCAMIWVVVESALMCS, LLAAYMMVYYVGTFLGQLLVS, LMSVLPWVTGLTLAGILPLLF, LGVNGCIISGIVLGSLYGLMP, ASIGFWMAVLVSAGILGQWPI, VQVFVVILGSIAMLSQAAMAP, ALFILGAAGFTLYPVAMAWAC, ALLLSYTVGSLLGPSFTAMLM, and FSDNLLFIMIASVSFIYLLML.

This sequence belongs to the major facilitator superfamily. YcaD (TC 2.A.1.26) family.

It is found in the cell inner membrane. This is an uncharacterized protein from Shigella dysenteriae serotype 1 (strain Sd197).